The chain runs to 488 residues: Metalloreductase STEAP3 (488 aa).

Over 1-207 (MSGEMDKPLI…AREVEAIPLR (207 aa)) the chain is Cytoplasmic. S11, S17, and S20 each carry phosphoserine. Residues 36–39 (SGDF), 58–59 (SR), 91–98 (VFREHYSS), N116, and A151 each bind NADP(+). FAD is bound by residues W152 and D160. The helical transmembrane segment at 208-228 (LLPSWKVPTLLALGLFVCFYA) threads the bilayer. Y229 is a binding site for Fe(3+). Residues 229–258 (YNFIRDVLQPYIRKDENKFYKMPLSVVNTT) lie on the Vesicular side of the membrane. A glycan (N-linked (GlcNAc...) asparagine) is linked at N256. Residues 259–279 (LPCVAYVLLSLVYLPGVLAAA) traverse the membrane as a helical segment. One can recognise a Ferric oxidoreductase domain in the interval 259–407 (LPCVAYVLLS…LGFVALMLST (149 aa)). Over 280–304 (LQLRRGTKYQRFPDWLDHWLQHRKQ) the chain is Cytoplasmic. Residues Q281, R302, and K303 each coordinate FAD. The chain crosses the membrane as a helical span at residues 305–325 (IGLLSFFFAMLHALYSFCLPL). H316 contributes to the heme b binding site. Position 319 (Y319) interacts with Fe(3+). At 326–358 (RRSHRYDLVNLAVKQVLANKSRLWVEEEVWRME) the chain is on the vesicular side. The chain crosses the membrane as a helical span at residues 359–379 (IYLSLGVLALGMLSLLAVTSI). S378 contacts FAD. Residues 380–390 (PSIANSLNWKE) are Cytoplasmic-facing. The chain crosses the membrane as a helical span at residues 391-411 (FSFVQSTLGFVALMLSTMHTL). Position 395 (Q395) interacts with FAD. Residue H409 participates in heme b binding. The Vesicular segment spans residues 412-433 (TYGWTRAFEENHYKFYLPPTFT). A helical membrane pass occupies residues 434-454 (LTLLLPCVIILAKGLFLLPCL). The Cytoplasmic portion of the chain corresponds to 455–488 (SHRLTKIRRGWERDGAVKFMLPAGHTQGEKTSHV). S486 is modified (phosphoserine).

Belongs to the STEAP family. In terms of assembly, homodimer. Interacts with BNIP3L, MYT1, RHBDL4/RHBDD1 and TCTP. The cofactor is FAD. Requires heme b as cofactor. In terms of processing, proteolytically cleaved by RHBDL4/RHBDD1. RHBDL4/RHBDD1-induced cleavage occurs at multiple sites in a glycosylation-independent manner. Glycosylated.

The protein resides in the endosome membrane. The catalysed reaction is 2 Fe(2+) + NADP(+) + H(+) = 2 Fe(3+) + NADPH. The enzyme catalyses 2 Cu(+) + NADP(+) + H(+) = 2 Cu(2+) + NADPH. Integral membrane protein that functions as a NADPH-dependent ferric-chelate reductase, using NADPH from one side of the membrane to reduce a Fe(3+) chelate that is bound on the other side of the membrane. Mediates sequential transmembrane electron transfer from NADPH to FAD and onto heme, and finally to the Fe(3+) chelate. Can also reduce Cu(2+) to Cu(1+). Mediates efficient transferrin-dependent iron uptake in erythroid cells. May play a role downstream of p53/TP53 to interface apoptosis and cell cycle progression. Indirectly involved in exosome secretion by facilitating the secretion of proteins such as TCTP. The chain is Metalloreductase STEAP3 (Steap3) from Rattus norvegicus (Rat).